Here is a 598-residue protein sequence, read N- to C-terminus: Kinesin-like protein klp-3 (598 aa).

Coiled-coil stretches lie at residues 19 to 66 and 89 to 118; these read EVEL…FIQG and GNLSEENLRLKNALSQMQKVARVNELLETD. The interval 133 to 155 is disordered; sequence ALSRDSSCSVPRSVSPQPTGDVI. The span at 136-150 shows a compositional bias: polar residues; the sequence is RDSSCSVPRSVSPQP. Residues 170–248 adopt a coiled-coil conformation; that stretch reads HWKKLQRCAE…LVELNGNIRV (79 aa). Residues 245 to 565 enclose the Kinesin motor domain; sequence NIRVFYRIRP…VNFAEKIGQV (321 aa). 328-335 contacts ATP; it reads GHTGSGKT. The interval 569–598 is disordered; that stretch reads SGTMKREPTRRSMTGISSGQRREIPASPRK.

It belongs to the TRAFAC class myosin-kinesin ATPase superfamily. Kinesin family.

The protein localises to the cytoplasm. The protein resides in the cytoskeleton. The polypeptide is Kinesin-like protein klp-3 (klp-3) (Caenorhabditis elegans).